Reading from the N-terminus, the 101-residue chain is Putative pterin-4-alpha-carbinolamine dehydratase (101 aa).

It belongs to the pterin-4-alpha-carbinolamine dehydratase family.

The catalysed reaction is (4aS,6R)-4a-hydroxy-L-erythro-5,6,7,8-tetrahydrobiopterin = (6R)-L-erythro-6,7-dihydrobiopterin + H2O. This chain is Putative pterin-4-alpha-carbinolamine dehydratase, found in Rhodopseudomonas palustris (strain BisA53).